Here is a 362-residue protein sequence, read N- to C-terminus: Porin Omp2b (362 aa).

A signal peptide spans 1 to 22; it reads MNIKSLLLGSAAALVAASGAQA.

The protein belongs to the alphaproteobacteria porin family. In terms of assembly, homotrimer.

The protein resides in the cell outer membrane. Its function is as follows. Forms passive diffusion pores that allow small molecular weight hydrophilic materials across the outer membrane. The chain is Porin Omp2b (omp2b) from Brucella melitensis biotype 1 (strain ATCC 23456 / CCUG 17765 / NCTC 10094 / 16M).